The chain runs to 151 residues: Large ribosomal subunit protein bL9 (151 aa).

This sequence belongs to the bacterial ribosomal protein bL9 family.

Functionally, binds to the 23S rRNA. The chain is Large ribosomal subunit protein bL9 from Mycolicibacterium gilvum (strain PYR-GCK) (Mycobacterium gilvum (strain PYR-GCK)).